A 277-amino-acid chain; its full sequence is Phosphatidylglycerol--prolipoprotein diacylglyceryl transferase (277 aa).

The next 3 helical transmembrane spans lie at 16 to 36, 62 to 82, and 101 to 121; these read FFQIHWYGLTYLAAFGLFYFL, LLFFGVVGVILGGRLGYVLFY, and GMAFHGGLLGVIVAMALFAHL. Residue Arg145 participates in a 1,2-diacyl-sn-glycero-3-phospho-(1'-sn-glycerol) binding. The next 2 membrane-spanning stretches (helical) occupy residues 214-234 and 243-263; these read PIWGRVSGLFVGGYGVFRFIA and FLGLLAFNLSMGQWLCVPMIV.

This sequence belongs to the Lgt family.

Its subcellular location is the cell inner membrane. The enzyme catalyses L-cysteinyl-[prolipoprotein] + a 1,2-diacyl-sn-glycero-3-phospho-(1'-sn-glycerol) = an S-1,2-diacyl-sn-glyceryl-L-cysteinyl-[prolipoprotein] + sn-glycerol 1-phosphate + H(+). The protein operates within protein modification; lipoprotein biosynthesis (diacylglyceryl transfer). Catalyzes the transfer of the diacylglyceryl group from phosphatidylglycerol to the sulfhydryl group of the N-terminal cysteine of a prolipoprotein, the first step in the formation of mature lipoproteins. This Leptothrix cholodnii (strain ATCC 51168 / LMG 8142 / SP-6) (Leptothrix discophora (strain SP-6)) protein is Phosphatidylglycerol--prolipoprotein diacylglyceryl transferase.